Consider the following 135-residue polypeptide: Large ribosomal subunit protein bL17 (135 aa).

Belongs to the bacterial ribosomal protein bL17 family. As to quaternary structure, part of the 50S ribosomal subunit. Contacts protein L32.

The chain is Large ribosomal subunit protein bL17 from Rhodopseudomonas palustris (strain BisB18).